The following is a 485-amino-acid chain: Phosphoglucosamine mutase (485 aa).

Ser-133 functions as the Phosphoserine intermediate in the catalytic mechanism. Mg(2+) is bound by residues Ser-133, Asp-274, Asp-276, and Asp-278. A Phosphoserine modification is found at Ser-133.

The protein belongs to the phosphohexose mutase family. The cofactor is Mg(2+). In terms of processing, activated by phosphorylation.

The enzyme catalyses alpha-D-glucosamine 1-phosphate = D-glucosamine 6-phosphate. Its function is as follows. Catalyzes the conversion of glucosamine-6-phosphate to glucosamine-1-phosphate. This chain is Phosphoglucosamine mutase, found in Rippkaea orientalis (strain PCC 8801 / RF-1) (Cyanothece sp. (strain PCC 8801)).